The chain runs to 434 residues: Gamma-glutamyl phosphate reductase (434 aa).

Belongs to the gamma-glutamyl phosphate reductase family.

It is found in the cytoplasm. The enzyme catalyses L-glutamate 5-semialdehyde + phosphate + NADP(+) = L-glutamyl 5-phosphate + NADPH + H(+). It functions in the pathway amino-acid biosynthesis; L-proline biosynthesis; L-glutamate 5-semialdehyde from L-glutamate: step 2/2. Functionally, catalyzes the NADPH-dependent reduction of L-glutamate 5-phosphate into L-glutamate 5-semialdehyde and phosphate. The product spontaneously undergoes cyclization to form 1-pyrroline-5-carboxylate. The protein is Gamma-glutamyl phosphate reductase of Nostoc sp. (strain PCC 7120 / SAG 25.82 / UTEX 2576).